The primary structure comprises 233 residues: Riboflavin kinase (233 aa).

Positions 1 to 104 (MVRDIKTFKF…YKKIFDDEGT (104 aa)) are H-T-H motif-like. The interval 105 to 233 (IKIKGEVFSG…GDFVEVEVIL (129 aa)) is riboflavin kinase. 114–119 (GVGEGR) contacts CDP. Mg(2+)-binding residues include Thr-143 and Asn-145. Thr-200 and Glu-208 together coordinate FMN. 213–216 (VKLR) contributes to the CDP binding site.

It belongs to the archaeal riboflavin kinase family. Mg(2+) is required as a cofactor.

It carries out the reaction riboflavin + CTP = CDP + FMN + H(+). The protein operates within cofactor biosynthesis; FMN biosynthesis; FMN from riboflavin (CTP route): step 1/1. Functionally, catalyzes the CTP-dependent phosphorylation of riboflavin (vitamin B2) to form flavin mononucleotide (FMN). This is Riboflavin kinase (ribK) from Archaeoglobus fulgidus (strain ATCC 49558 / DSM 4304 / JCM 9628 / NBRC 100126 / VC-16).